Here is a 213-residue protein sequence, read N- to C-terminus: Imidazole glycerol phosphate synthase subunit HisH (213 aa).

A Glutamine amidotransferase type-1 domain is found at 1 to 212 (MLAILDYKAG…HRYCTEAADA (212 aa)). The active-site Nucleophile is cysteine 79. Active-site residues include histidine 187 and glutamate 189.

Heterodimer of HisH and HisF.

It localises to the cytoplasm. It catalyses the reaction 5-[(5-phospho-1-deoxy-D-ribulos-1-ylimino)methylamino]-1-(5-phospho-beta-D-ribosyl)imidazole-4-carboxamide + L-glutamine = D-erythro-1-(imidazol-4-yl)glycerol 3-phosphate + 5-amino-1-(5-phospho-beta-D-ribosyl)imidazole-4-carboxamide + L-glutamate + H(+). It carries out the reaction L-glutamine + H2O = L-glutamate + NH4(+). It participates in amino-acid biosynthesis; L-histidine biosynthesis; L-histidine from 5-phospho-alpha-D-ribose 1-diphosphate: step 5/9. In terms of biological role, IGPS catalyzes the conversion of PRFAR and glutamine to IGP, AICAR and glutamate. The HisH subunit catalyzes the hydrolysis of glutamine to glutamate and ammonia as part of the synthesis of IGP and AICAR. The resulting ammonia molecule is channeled to the active site of HisF. The protein is Imidazole glycerol phosphate synthase subunit HisH of Nitratidesulfovibrio vulgaris (strain ATCC 29579 / DSM 644 / CCUG 34227 / NCIMB 8303 / VKM B-1760 / Hildenborough) (Desulfovibrio vulgaris).